Consider the following 86-residue polypeptide: Large ribosomal subunit protein uL23 (86 aa).

This sequence belongs to the universal ribosomal protein uL23 family. As to quaternary structure, part of the 50S ribosomal subunit. Contacts protein L29.

Functionally, binds to 23S rRNA. One of the proteins that surrounds the polypeptide exit tunnel on the outside of the ribosome. The protein is Large ribosomal subunit protein uL23 of Thermococcus kodakarensis (strain ATCC BAA-918 / JCM 12380 / KOD1) (Pyrococcus kodakaraensis (strain KOD1)).